Here is a 1169-residue protein sequence, read N- to C-terminus: Pesticidal crystal protein Cry1Fb (1169 aa).

This sequence belongs to the delta endotoxin family.

Functionally, promotes colloidosmotic lysis by binding to the midgut epithelial cells of insects. The sequence is that of Pesticidal crystal protein Cry1Fb (cry1Fb) from Bacillus thuringiensis subsp. morrisoni.